We begin with the raw amino-acid sequence, 337 residues long: DNA-directed RNA polymerase subunit alpha (337 aa).

The interval Met1–Glu233 is alpha N-terminal domain (alpha-NTD). Residues Lys265–Phe337 form an alpha C-terminal domain (alpha-CTD) region.

It belongs to the RNA polymerase alpha chain family. In terms of assembly, in plastids the minimal PEP RNA polymerase catalytic core is composed of four subunits: alpha, beta, beta', and beta''. When a (nuclear-encoded) sigma factor is associated with the core the holoenzyme is formed, which can initiate transcription.

The protein localises to the plastid. The protein resides in the chloroplast. The catalysed reaction is RNA(n) + a ribonucleoside 5'-triphosphate = RNA(n+1) + diphosphate. DNA-dependent RNA polymerase catalyzes the transcription of DNA into RNA using the four ribonucleoside triphosphates as substrates. This is DNA-directed RNA polymerase subunit alpha from Acorus calamus (Sweet flag).